Reading from the N-terminus, the 429-residue chain is Glutamate-1-semialdehyde 2,1-aminomutase 2 (429 aa).

Lys268 is subject to N6-(pyridoxal phosphate)lysine.

It belongs to the class-III pyridoxal-phosphate-dependent aminotransferase family. HemL subfamily. Homodimer. Pyridoxal 5'-phosphate serves as cofactor.

Its subcellular location is the cytoplasm. It catalyses the reaction (S)-4-amino-5-oxopentanoate = 5-aminolevulinate. The protein operates within porphyrin-containing compound metabolism; protoporphyrin-IX biosynthesis; 5-aminolevulinate from L-glutamyl-tRNA(Glu): step 2/2. This Bacillus mycoides (strain KBAB4) (Bacillus weihenstephanensis) protein is Glutamate-1-semialdehyde 2,1-aminomutase 2.